The chain runs to 117 residues: MMDNNEPISAEHGQAGENLAMNYLLEQGLTFIERNVRFKFGEIDLVMKNGKEWIFVEVKYRSKSQYGGAINALSSGQIKRLRRAAEHYMQLNNIDAICRFDLIAVDAGQIQWLPNAF.

It belongs to the UPF0102 family.

The polypeptide is UPF0102 protein Ssed_4252 (Shewanella sediminis (strain HAW-EB3)).